The following is a 198-amino-acid chain: Host transcription reprogramming factor 1 (198 aa).

An N-terminal signal peptide occupies residues 1-19 (MQLSNFLSIWALVAMGATA). Disordered stretches follow at residues 21 to 59 (PMPSGSAPGNPFADGEAYGARPSQGLTPVPKVHDGSYHS) and 71 to 198 (ERLA…PVQL). A C2H2-type zinc finger spans residues 58-81 (HSCETCAAPFRTEERLAAHRQADH). 3 stretches are compositionally biased toward basic and acidic residues: residues 71 to 80 (ERLAAHRQAD), 104 to 128 (TSERERLDRLASRVGEDYVEKRSQE), and 167 to 177 (KLDKPTRKEQY).

It localises to the secreted. The protein resides in the host nucleus. Its function is as follows. Secreted effector that translocates into the nuclei of host cells to reprogram the expression of immunity-associated genes by binding to effector binding elements (EBEs) in rice. Binds the 5'-CAATCTTC-3' EBE of promoters from targeted rice genes and probably recruits a yet to be determined host repressor. Causes ambivalent immunity with increased susceptibility to the hemibiotrophic pathogens Magnaporthe oryzae and Xanthomonas oryzae pv. oryzae, but enhances resistance to Cochliobolus miyabeanus, a necrotrophic pathogen. This Pyricularia oryzae (strain 70-15 / ATCC MYA-4617 / FGSC 8958) (Rice blast fungus) protein is Host transcription reprogramming factor 1.